Consider the following 499-residue polypeptide: MNIKASEIAAVLKEEIKNYKADFTPNEVGVVVEVGDGIARIIGLPHVMANEMILFESGAVGLAFNLEEETIGAIVLGDYYGIKEGSKVSRLKRILEVPVGDALLGRVVNPLGVPIDGHGEITTDKRRVIEFPAPGIADRQAVKQPLQTGIKAIDSMTPIGRGQRQLIIGDRGTGKTSIALDAIINQKGTGVICIYVAIGQKASTVAGVVDTLRQHGALEYTIVVAATAADSAPLQYIAPYGGCAMAEYFMYEQKKDTLIIYDDLTKQANAYRQISLLLRRPPGREAFPGDVFYLHSRLLERAAKLSDELGGGSLTALPIIETQDNEVSAYIPTNVISITDGQIYLLTSLFMSGVRPAIDVGISVSRVGGNAQTKAMKKVAGTLRLDLASYRSLEAFSQLGIGLDKATLAQLDRGAKMVELLKQKQYSPIPFEEQVVVIFAATKGFLDNIEVDRVHEFEWRLLQYMRADKQNILDDIREKKDIEDMDGLYKIIEEFKSKF.

169–176 (GDRGTGKT) serves as a coordination point for ATP.

The protein belongs to the ATPase alpha/beta chains family. As to quaternary structure, F-type ATPases have 2 components, CF(1) - the catalytic core - and CF(0) - the membrane proton channel. CF(1) has five subunits: alpha(3), beta(3), gamma(1), delta(1), epsilon(1). CF(0) has three main subunits: a(1), b(2) and c(9-12). The alpha and beta chains form an alternating ring which encloses part of the gamma chain. CF(1) is attached to CF(0) by a central stalk formed by the gamma and epsilon chains, while a peripheral stalk is formed by the delta and b chains.

It localises to the cell inner membrane. The enzyme catalyses ATP + H2O + 4 H(+)(in) = ADP + phosphate + 5 H(+)(out). Functionally, produces ATP from ADP in the presence of a proton gradient across the membrane. The alpha chain is a regulatory subunit. This Brachyspira hyodysenteriae (strain ATCC 49526 / WA1) protein is ATP synthase subunit alpha.